The primary structure comprises 127 residues: Large ribosomal subunit protein bL20 (127 aa).

This sequence belongs to the bacterial ribosomal protein bL20 family.

In terms of biological role, binds directly to 23S ribosomal RNA and is necessary for the in vitro assembly process of the 50S ribosomal subunit. It is not involved in the protein synthesizing functions of that subunit. The polypeptide is Large ribosomal subunit protein bL20 (rplT) (Streptomyces coelicolor (strain ATCC BAA-471 / A3(2) / M145)).